A 280-amino-acid chain; its full sequence is Ribosomal RNA small subunit methyltransferase A (280 aa).

S-adenosyl-L-methionine-binding residues include Asn18, Leu20, Gly45, Glu66, Asp89, and Asn110.

Belongs to the class I-like SAM-binding methyltransferase superfamily. rRNA adenine N(6)-methyltransferase family. RsmA subfamily.

The protein resides in the cytoplasm. It carries out the reaction adenosine(1518)/adenosine(1519) in 16S rRNA + 4 S-adenosyl-L-methionine = N(6)-dimethyladenosine(1518)/N(6)-dimethyladenosine(1519) in 16S rRNA + 4 S-adenosyl-L-homocysteine + 4 H(+). In terms of biological role, specifically dimethylates two adjacent adenosines (A1518 and A1519) in the loop of a conserved hairpin near the 3'-end of 16S rRNA in the 30S particle. May play a critical role in biogenesis of 30S subunits. This Cupriavidus necator (strain ATCC 17699 / DSM 428 / KCTC 22496 / NCIMB 10442 / H16 / Stanier 337) (Ralstonia eutropha) protein is Ribosomal RNA small subunit methyltransferase A.